The sequence spans 252 residues: Imidazole glycerol phosphate synthase subunit HisF (252 aa).

Active-site residues include aspartate 11 and aspartate 130.

This sequence belongs to the HisA/HisF family. In terms of assembly, heterodimer of HisH and HisF.

The protein localises to the cytoplasm. It carries out the reaction 5-[(5-phospho-1-deoxy-D-ribulos-1-ylimino)methylamino]-1-(5-phospho-beta-D-ribosyl)imidazole-4-carboxamide + L-glutamine = D-erythro-1-(imidazol-4-yl)glycerol 3-phosphate + 5-amino-1-(5-phospho-beta-D-ribosyl)imidazole-4-carboxamide + L-glutamate + H(+). It functions in the pathway amino-acid biosynthesis; L-histidine biosynthesis; L-histidine from 5-phospho-alpha-D-ribose 1-diphosphate: step 5/9. IGPS catalyzes the conversion of PRFAR and glutamine to IGP, AICAR and glutamate. The HisF subunit catalyzes the cyclization activity that produces IGP and AICAR from PRFAR using the ammonia provided by the HisH subunit. This chain is Imidazole glycerol phosphate synthase subunit HisF, found in Desulforamulus reducens (strain ATCC BAA-1160 / DSM 100696 / MI-1) (Desulfotomaculum reducens).